The chain runs to 665 residues: Methionine--tRNA ligase (665 aa).

Residues 13–23 (YYPSGKLHIGS) carry the 'HIGH' region motif. The short motif at 309–313 (KMSKS) is the 'KMSKS' region element. ATP is bound at residue lysine 312. Residues 562-665 (DFDKVEIRVA…PAVPNGSVIG (104 aa)) enclose the tRNA-binding domain.

It belongs to the class-I aminoacyl-tRNA synthetase family. MetG type 2B subfamily. As to quaternary structure, homodimer.

The protein localises to the cytoplasm. The catalysed reaction is tRNA(Met) + L-methionine + ATP = L-methionyl-tRNA(Met) + AMP + diphosphate. Its function is as follows. Is required not only for elongation of protein synthesis but also for the initiation of all mRNA translation through initiator tRNA(fMet) aminoacylation. The protein is Methionine--tRNA ligase (metG) of Streptococcus pneumoniae serotype 4 (strain ATCC BAA-334 / TIGR4).